The primary structure comprises 389 residues: tRNA-specific 2-thiouridylase MnmA (389 aa).

Residues 30–37 (GLSGGVDS) and leucine 56 each bind ATP. The active-site Nucleophile is the cysteine 117. Cysteine 117 and cysteine 216 are disulfide-bonded. Glycine 142 provides a ligand contact to ATP. An interaction with tRNA region spans residues 166–168 (KDQ). Cysteine 216 (cysteine persulfide intermediate) is an active-site residue. An interaction with tRNA region spans residues 321-322 (RY).

This sequence belongs to the MnmA/TRMU family.

The protein localises to the cytoplasm. It carries out the reaction S-sulfanyl-L-cysteinyl-[protein] + uridine(34) in tRNA + AH2 + ATP = 2-thiouridine(34) in tRNA + L-cysteinyl-[protein] + A + AMP + diphosphate + H(+). Catalyzes the 2-thiolation of uridine at the wobble position (U34) of tRNA, leading to the formation of s(2)U34. The chain is tRNA-specific 2-thiouridylase MnmA from Synechococcus sp. (strain CC9902).